We begin with the raw amino-acid sequence, 320 residues long: MRSVIEPDHSIQLNEAIYCYDICTNDFAYNLIAVAFRKHLSLLLVGLPEESGEFGYTRLQDMDLGEKEQRSVSALAFSPDTSLNCTPNNVTLCAANGSQLKLYRTDLGQFTSLQVLRGHGDYVNDVSWVCDGELLASVSDDFTCRFWTTTGGGENVITFGLSSAGMSVKSHPEDPNKVLVAEKKGIIHLYNVTLKQTVISVESPKFPLMSADWAHSNRLFITSLAGGDVVTWDLNRPYVPADVKQVHEDCGRVVRFAPGSSEMVIAMVIGLTLKVFAAKSTVPLLEASLKSYGGMAWHQRLPYISAVSDRKLLFWKVQMK.

WD repeat units follow at residues 67–113 (KEQR…FTSL), 118–157 (GHGD…ENVI), 160–200 (GLSS…TVIS), and 203–242 (SPKF…VPAD).

The protein resides in the nucleus. It localises to the nuclear pore complex. Its function is as follows. As part of the nuclear pore complex (NPC), has a role in its assembly and function. (Microbial infection) Required for optimal replication of E.chaffeensis. The chain is Nucleoporin Nup37 from Drosophila melanogaster (Fruit fly).